Consider the following 481-residue polypeptide: Xylulose kinase (481 aa).

81–82 (QH) is a substrate binding site. Asp239 functions as the Proton acceptor in the catalytic mechanism.

It belongs to the FGGY kinase family.

It catalyses the reaction D-xylulose + ATP = D-xylulose 5-phosphate + ADP + H(+). Catalyzes the phosphorylation of D-xylulose to D-xylulose 5-phosphate. In Streptomyces coelicolor (strain ATCC BAA-471 / A3(2) / M145), this protein is Xylulose kinase.